A 225-amino-acid chain; its full sequence is Putative ankyrin repeat protein RBE_1025 (225 aa).

ANK repeat units follow at residues 6-35, 41-71, 75-120, and 124-153; these read LSKD…AINP, NGKT…NVNI, TGFT…DVNI, and KGNT…SPFI.

The sequence is that of Putative ankyrin repeat protein RBE_1025 from Rickettsia bellii (strain RML369-C).